The primary structure comprises 616 residues: MPKYRSATTTHGRNMAGARALWRATGMTDADFGKPIIAVVNSFTQFVPGHVHLRDLGKLVAEQIEAAGGVAKEFNTIAVDDGIAMGHGGMLYSLPSRELIADSVEYMVNAHCADAMVCISNCDKITPGMLMASLRLNIPVIFVSGGPMEAGKTKLSDQIIKLDLVDAMIQGADPKVSDSQSDQVERSACPTCGSCSGMFTANSMNCLTEALGLSQPGNGSLLATHADRKQLFLNAGKRIVELTKRYYEQNDESALPRNIASKAAFENAMTLDIAMGGSTNTVLHLLAAAQEAEIDFTMSDIDKLSRKVPQLCKVAPSTQKYHMEDVHRAGGVIGILGELDRAGLLNRDVKNVLGLTLPQTLEQYDVMLTQDDAVKNMFRAGPAGIRTTQAFSQDCRWDTLDDDRANGCIRSLEHAYSKDGGLAVLYGNFAENGCIVKTAGVDDSILKFTGPAKVYESQDDAVEAILGGKVVAGDVVVIRYEGPKGGPGMQEMLYPTSFLKSMGLGKACALITDGRFSGGTSGLSIGHVSPEAASGGSIGLIEDGDLIAIDIPNRGIQLQVSDAELAARREAQEARGDKAWTPKNRERQVSFALRAYASLATSADKGAVRDKSKLGG.

Aspartate 81 lines the Mg(2+) pocket. Cysteine 122 contacts [2Fe-2S] cluster. Residues aspartate 123 and lysine 124 each coordinate Mg(2+). N6-carboxylysine is present on lysine 124. Cysteine 195 provides a ligand contact to [2Fe-2S] cluster. Residue glutamate 491 coordinates Mg(2+). Residue serine 517 is the Proton acceptor of the active site.

It belongs to the IlvD/Edd family. In terms of assembly, homodimer. It depends on [2Fe-2S] cluster as a cofactor. Mg(2+) is required as a cofactor.

It carries out the reaction (2R)-2,3-dihydroxy-3-methylbutanoate = 3-methyl-2-oxobutanoate + H2O. It catalyses the reaction (2R,3R)-2,3-dihydroxy-3-methylpentanoate = (S)-3-methyl-2-oxopentanoate + H2O. The protein operates within amino-acid biosynthesis; L-isoleucine biosynthesis; L-isoleucine from 2-oxobutanoate: step 3/4. It functions in the pathway amino-acid biosynthesis; L-valine biosynthesis; L-valine from pyruvate: step 3/4. In terms of biological role, functions in the biosynthesis of branched-chain amino acids. Catalyzes the dehydration of (2R,3R)-2,3-dihydroxy-3-methylpentanoate (2,3-dihydroxy-3-methylvalerate) into 2-oxo-3-methylpentanoate (2-oxo-3-methylvalerate) and of (2R)-2,3-dihydroxy-3-methylbutanoate (2,3-dihydroxyisovalerate) into 2-oxo-3-methylbutanoate (2-oxoisovalerate), the penultimate precursor to L-isoleucine and L-valine, respectively. This is Dihydroxy-acid dehydratase from Shigella boydii serotype 4 (strain Sb227).